A 323-amino-acid chain; its full sequence is Serine/threonine-protein phosphatase PP1 (323 aa).

Residues aspartate 63, histidine 65, aspartate 91, and asparagine 123 each contribute to the Mn(2+) site. Histidine 124 serves as the catalytic Proton donor. Mn(2+)-binding residues include histidine 172 and histidine 247.

It belongs to the PPP phosphatase family. PP-1 subfamily. Mn(2+) serves as cofactor.

It catalyses the reaction O-phospho-L-seryl-[protein] + H2O = L-seryl-[protein] + phosphate. The enzyme catalyses O-phospho-L-threonyl-[protein] + H2O = L-threonyl-[protein] + phosphate. Plays an important role in the control of mitosis by reversing the action of the nimA kinase. The chain is Serine/threonine-protein phosphatase PP1 (bimG) from Emericella nidulans (strain FGSC A4 / ATCC 38163 / CBS 112.46 / NRRL 194 / M139) (Aspergillus nidulans).